The chain runs to 130 residues: L-ectoine synthase (130 aa).

Belongs to the ectoine synthase family.

It carries out the reaction (2S)-4-acetamido-2-aminobutanoate = L-ectoine + H2O. It functions in the pathway amine and polyamine biosynthesis; ectoine biosynthesis; L-ectoine from L-aspartate 4-semialdehyde: step 3/3. In terms of biological role, catalyzes the circularization of gamma-N-acetyl-alpha,gamma-diaminobutyric acid (ADABA) to ectoine (1,4,5,6-tetrahydro-2-methyl-4-pyrimidine carboxylic acid), which is an excellent osmoprotectant. This chain is L-ectoine synthase, found in Mycolicibacterium vanbaalenii (strain DSM 7251 / JCM 13017 / BCRC 16820 / KCTC 9966 / NRRL B-24157 / PYR-1) (Mycobacterium vanbaalenii).